A 60-amino-acid polypeptide reads, in one-letter code: Ras-related protein Rab-2A (60 aa).

Residues serine 1, cysteine 2, and threonine 19 each coordinate GTP. Serine 1 contacts Mg(2+). The Effector region signature appears at 16–24 (HDLTIGVEF). Residue threonine 19 coordinates Mg(2+).

The protein belongs to the small GTPase superfamily. Rab family. In terms of assembly, interacts with PRKCI. Interacts with TRIP11. Interacts (in GTP-bound form) with GARIN1B. Interacts (GTP-bound) with HOPS complex component VPS39; interaction contributes to obtaining a functional HOPS complex that promotes autophagosome-lysosome membrane fusion driven by STX17-SNAP29-VAMP8. May interact with VPS41. It depends on Mg(2+) as a cofactor. In terms of processing, prenylated. Prenylation is required for association with cellular membranes.

The protein localises to the endoplasmic reticulum-Golgi intermediate compartment membrane. The protein resides in the melanosome. It is found in the endoplasmic reticulum membrane. Its subcellular location is the golgi apparatus membrane. It localises to the cytoplasmic vesicle. The protein localises to the secretory vesicle. The protein resides in the acrosome. It is found in the autophagosome membrane. It carries out the reaction GTP + H2O = GDP + phosphate + H(+). Regulated by guanine nucleotide exchange factors (GEFs) which promote the exchange of bound GDP for free GTP, GTPase activating proteins (GAPs) which increase the GTP hydrolysis activity, and GDP dissociation inhibitors (GDIs) which inhibit the dissociation of the nucleotide from the GTPase. Functionally, the small GTPases Rab are key regulators of intracellular membrane trafficking, from the formation of transport vesicles to their fusion with membranes. Rabs cycle between active GTP-bound and inactive GDP-bound states. In their active state, drive transport of vesicular carriers from donor organelles to acceptor organelles to regulate the membrane traffic that maintains organelle identity and morphology. RAB2A regulates autophagy by promoting autophagosome-lysosome fusion via recruitment of the HOPS endosomal tethering complex; this process involves autophagosomal RAB2A and lysosomal RAB39A recruitment of HOPS subcomplexes VPS39-VPS11 and VPS41-VPS16-VPS18-VPS33A, respectively, which assemble into a functional complex to mediate membrane tethering and SNAREs-driven membrane fusion. Required for protein transport from the endoplasmic reticulum to the Golgi complex. Regulates the compacted morphology of the Golgi. Together with RAB2B, redundantly required for efficient autophagic flux. This Mesocricetus auratus (Golden hamster) protein is Ras-related protein Rab-2A.